Here is a 479-residue protein sequence, read N- to C-terminus: Adenylate kinase 8 (479 aa).

2 adenylate kinase regions span residues 58 to 258 and 269 to 471; these read PKVV…TYVQ and PKVL…SGII. Residue 67-72 coordinates ATP; it reads ASGKTT. Residues 87–113 form an NMP 1 region; the sequence is TKESLLEREFSRLSVEAKSYYQVYKKI. AMP contacts are provided by residues 140 to 143, Gln-147, and Arg-203; that span reads GIPE. The LID 1 stretch occupies residues 177 to 206; that stretch reads GKRIDPVTGEIYHTTFDWPPEPEIQNRLRQ. 278-283 contributes to the ATP binding site; the sequence is GSGKRL. An NMP 2 region spans residues 298–327; sequence SCGQLLKEAVAAKSSFGELIQPFFEKRMTV. Residues 325 to 327, 354 to 357, and Gln-361 contribute to the AMP site; these read MTV and GFPR. Residues 391–424 are LID 2; the sequence is LRRTDPVTGERFHLMYKPPPTIEVQVRLLQNPKD. Residue Arg-392 participates in ATP binding.

It belongs to the adenylate kinase family. In terms of assembly, interacts with CFAP45 and CFAP52; CFAP45 and AK8 dimerization may create a cavity at the interface of the dimer that can accommodate AMP.

The protein resides in the cytoplasm. It localises to the cytosol. The protein localises to the cytoskeleton. Its subcellular location is the cilium axoneme. The catalysed reaction is AMP + ATP = 2 ADP. It carries out the reaction a 2'-deoxyribonucleoside 5'-diphosphate + ATP = a 2'-deoxyribonucleoside 5'-triphosphate + ADP. The enzyme catalyses a ribonucleoside 5'-diphosphate + ATP = a ribonucleoside 5'-triphosphate + ADP. Nucleoside monophosphate (NMP) kinase that catalyzes the reversible transfer of the terminal phosphate group between nucleoside triphosphates and monophosphates. Has highest activity toward AMP, and weaker activity toward dAMP, CMP and dCMP. Also displays broad nucleoside diphosphate kinase activity. The sequence is that of Adenylate kinase 8 (Ak8) from Mus musculus (Mouse).